A 330-amino-acid chain; its full sequence is Probable cytosolic iron-sulfur protein assembly protein 1 (330 aa).

WD repeat units follow at residues 12–49, 56–95, 105–144, 151–190, 195–236, 248–286, and 292–330; these read LYKEKIWSFDFSQGILATGSTDRKIKLVSVKDDDFTLI, AHKKAIRSVAWRPHTSLLAAGSFDSTVSIWAKEESADRTF, GHENEVKGVAWSNDGYYLATCSRDKSVWIWETDESGEEYE, EHSQDVKHVIWHPSEALLASSSYDDTVRIWKDYDDDWECV, GHEG…EDDQ, VHKRQVYNVAWGFNGLIASVGADGVLAVYEEVDGEWKVF, and CHGVYEINVVKWLELNGKTILATGGDDGIVNFWSLEKAA.

It belongs to the WD repeat CIA1 family. As to quaternary structure, interacts with NAR1.

The protein localises to the cytoplasm. It is found in the nucleus. Its function is as follows. Essential component of the cytosolic iron-sulfur (Fe/S) protein assembly machinery. Required for the maturation of extramitochondrial Fe/S proteins. The polypeptide is Probable cytosolic iron-sulfur protein assembly protein 1 (Saccharomyces cerevisiae (strain YJM789) (Baker's yeast)).